A 980-amino-acid polypeptide reads, in one-letter code: Vacuolar protein sorting-associated protein 11 homolog (980 aa).

The CHCR repeat unit spans residues 407 to 554 (YKETIGMLEP…GRDLLIHARD (148 aa)). An RING-type; atypical zinc finger spans residues 803-843 (CSACDTPLQLPTVHFLCKHAYHVHCFESYNMDGSDKCPACQ). Positions 886–898 (TKKTKKSEAKKDP) are enriched in basic and acidic residues. The interval 886 to 980 (TKKTKKSEAK…APAPSTNPFD (95 aa)) is disordered. Polar residues-rich tracts occupy residues 917-937 (TTIS…SRQR) and 947-960 (TNPF…TRLS).

This sequence belongs to the VPS11 family. As to quaternary structure, probable core component of at least two putative endosomal tethering complexes, the homotypic fusion and vacuole protein sorting (HOPS) complex and the class C core vacuole/endosome tethering (CORVET) complex. Their common core is composed of the class C Vps proteins vps-11, vps-16 and vps-18, which in HOPS further associates with vps-33.1, vps-39 and vps-41 and in CORVET with vps-8 and vps-33.2.

It is found in the late endosome membrane. It localises to the lysosome membrane. Functionally, plays a role in vesicle-mediated protein trafficking to lysosomal compartments including the endocytic membrane transport pathways. Believed to act as a core component of the putative HOPS and CORVET endosomal tethering complexes which are proposed to be involved in the rab-5-to-rab-7 endosome conversion probably implicating sand-1, and via binding SNAREs and SNARE complexes to mediate tethering and docking events during SNARE-mediated membrane fusion. The HOPS complex is proposed to be recruited to Rab7 on the late endosomal membrane and to regulate late endocytic, phagocytic and autophagic traffic towards lysosomes. Within the HOPS complex, contributes to the normal development of gut granules in embryonic and adult intestinal cells. The CORVET complex is proposed to function as a Rab5 effector to mediate early endosome fusion probably in specific endosome subpopulations. Required for fusion of endosomes and autophagosomes with lysosomes. Involved in cargo transport from early to late endosomes and required for the transition from early to late endosomes. Possibly has a role in clearance of apoptotic cells during programmed cell death. The sequence is that of Vacuolar protein sorting-associated protein 11 homolog from Caenorhabditis elegans.